An 88-amino-acid chain; its full sequence is Small ribosomal subunit protein bS20 (88 aa).

The segment at 1 to 28 (MANIKSQIKRNRQNEKRRLRNKSVKSSL) is disordered. A compositionally biased stretch (basic residues) spans 7–23 (QIKRNRQNEKRRLRNKS).

This sequence belongs to the bacterial ribosomal protein bS20 family.

Functionally, binds directly to 16S ribosomal RNA. This Salinispora tropica (strain ATCC BAA-916 / DSM 44818 / JCM 13857 / NBRC 105044 / CNB-440) protein is Small ribosomal subunit protein bS20.